A 51-amino-acid polypeptide reads, in one-letter code: Large ribosomal subunit protein bL33 (51 aa).

The protein belongs to the bacterial ribosomal protein bL33 family.

This chain is Large ribosomal subunit protein bL33, found in Francisella tularensis subsp. tularensis (strain FSC 198).